Here is a 191-residue protein sequence, read N- to C-terminus: Adenylate kinase (191 aa).

ATP is bound at residue 12–17 (GSGKTT). An NMP region spans residues 33 to 62 (STGDLLRAEVASGSELGKLIDSFISKGNLV). Residues T34, R39, 60–62 (NLV), 87–90 (GYPR), and Q94 contribute to the AMP site. Positions 129–135 (GRARGAD) are LID. R130 serves as a coordination point for ATP. Positions 132 and 144 each coordinate AMP. Position 172 (R172) interacts with ATP.

It belongs to the adenylate kinase family. In terms of assembly, monomer.

The protein resides in the cytoplasm. It carries out the reaction AMP + ATP = 2 ADP. Its pathway is purine metabolism; AMP biosynthesis via salvage pathway; AMP from ADP: step 1/1. In terms of biological role, catalyzes the reversible transfer of the terminal phosphate group between ATP and AMP. Plays an important role in cellular energy homeostasis and in adenine nucleotide metabolism. The protein is Adenylate kinase of Campylobacter fetus subsp. fetus (strain 82-40).